Reading from the N-terminus, the 392-residue chain is WD repeat-containing protein GTS1 (392 aa).

WD repeat units lie at residues Gly-81–Arg-124, Gly-128–Cys-167, Ser-171–Asp-211, and Gly-323–Asn-368.

In terms of tissue distribution, expressed in germinating seeds, rosettes leaves, flowers and siliques.

Functionally, involved in the control of plant growth development. Acts as negative regulator of seed germination, cell division in meristematic regions, plant growth and overall biomass accumulation. May function by regulating ribosome activities and biogenesis in plant cells. The polypeptide is WD repeat-containing protein GTS1 (Arabidopsis thaliana (Mouse-ear cress)).